Reading from the N-terminus, the 187-residue chain is Cell division protein SepF (187 aa).

The disordered stretch occupies residues 21-97 (EVEVPDKQQQ…ATPNNASQES (77 aa)). Polar residues-rich tracts occupy residues 38 to 63 (EQSQQTTKQNAIKSVPQKSASRYTTT) and 70 to 97 (RMSNYSKNNSRNVVTMNNATPNNASQES).

It belongs to the SepF family. Homodimer. Interacts with FtsZ.

Its subcellular location is the cytoplasm. Cell division protein that is part of the divisome complex and is recruited early to the Z-ring. Probably stimulates Z-ring formation, perhaps through the cross-linking of FtsZ protofilaments. Its function overlaps with FtsA. The polypeptide is Cell division protein SepF (Staphylococcus aureus (strain MRSA252)).